A 201-amino-acid chain; its full sequence is Small ribosomal subunit protein uS4 (201 aa).

The tract at residues 26-47 (LSKKNYPPGQHGNNRRRKTSEY) is disordered. In terms of domain architecture, S4 RNA-binding spans 92 to 154 (ARLDNVVFRL…SKSLEVIADA (63 aa)).

It belongs to the universal ribosomal protein uS4 family. In terms of assembly, part of the 30S ribosomal subunit. Contacts protein S5. The interaction surface between S4 and S5 is involved in control of translational fidelity.

Its function is as follows. One of the primary rRNA binding proteins, it binds directly to 16S rRNA where it nucleates assembly of the body of the 30S subunit. Functionally, with S5 and S12 plays an important role in translational accuracy. In Porphyromonas gingivalis (strain ATCC 33277 / DSM 20709 / CIP 103683 / JCM 12257 / NCTC 11834 / 2561), this protein is Small ribosomal subunit protein uS4.